A 130-amino-acid chain; its full sequence is Small ribosomal subunit protein uS11 (130 aa).

Belongs to the universal ribosomal protein uS11 family. Part of the 30S ribosomal subunit. Interacts with proteins S7 and S18. Binds to IF-3.

In terms of biological role, located on the platform of the 30S subunit, it bridges several disparate RNA helices of the 16S rRNA. Forms part of the Shine-Dalgarno cleft in the 70S ribosome. This chain is Small ribosomal subunit protein uS11, found in Prochlorococcus marinus (strain AS9601).